The following is a 312-amino-acid chain: Elongation factor Ts, mitochondrial (312 aa).

This sequence belongs to the EF-Ts family.

Its subcellular location is the mitochondrion. Functionally, associates with the EF-Tu.GDP complex and induces the exchange of GDP to GTP. It remains bound to the aminoacyl-tRNA.EF-Tu.GTP complex up to the GTP hydrolysis stage on the ribosome. In Xenopus laevis (African clawed frog), this protein is Elongation factor Ts, mitochondrial (tsfm).